The sequence spans 171 residues: Co-chaperone protein HscB (171 aa).

One can recognise a J domain in the interval 2–74 (DYFTLFGLPA…LMRAEYLLSL (73 aa)).

It belongs to the HscB family. As to quaternary structure, interacts with HscA and stimulates its ATPase activity. Interacts with IscU.

Co-chaperone involved in the maturation of iron-sulfur cluster-containing proteins. Seems to help targeting proteins to be folded toward HscA. The chain is Co-chaperone protein HscB from Escherichia coli (strain SMS-3-5 / SECEC).